The sequence spans 139 residues: Acyl carrier protein 4, chloroplastic (139 aa).

A chloroplast-targeting transit peptide spans 1 to 55 (MASAAAGASICIKSASCSPLAPGRISSLRSVSLPVSRKSFPSLRSSKGSFARVSC). The Carrier domain occupies 59 to 134 (PETVAKVCRI…DAADLIEKLM (76 aa)). Residue serine 94 is modified to O-(pantetheine 4'-phosphoryl)serine.

The protein belongs to the acyl carrier protein (ACP) family. 4'-phosphopantetheine is transferred from CoA to a specific serine of apo-ACP by acpS. This modification is essential for activity because fatty acids are bound in thioester linkage to the sulfhydryl of the prosthetic group.

It localises to the plastid. The protein resides in the chloroplast. It functions in the pathway lipid metabolism; fatty acid biosynthesis. Functionally, carrier of the growing fatty acid chain in fatty acid biosynthesis. This Cuphea lanceolata (Cigar flower) protein is Acyl carrier protein 4, chloroplastic (ACL1).